The primary structure comprises 357 residues: Glycerol-3-phosphate dehydrogenase [NAD(P)+] (357 aa).

Ser30, Phe31, Arg51, and Lys124 together coordinate NADPH. Lys124 and Gly152 together coordinate sn-glycerol 3-phosphate. Residue Ala156 participates in NADPH binding. The sn-glycerol 3-phosphate site is built by Lys207, Asp260, Ser270, Arg271, and Asn272. Residue Lys207 is the Proton acceptor of the active site. NADPH is bound at residue Arg271. Glu297 lines the NADPH pocket.

The protein belongs to the NAD-dependent glycerol-3-phosphate dehydrogenase family.

The protein localises to the cytoplasm. It catalyses the reaction sn-glycerol 3-phosphate + NAD(+) = dihydroxyacetone phosphate + NADH + H(+). The catalysed reaction is sn-glycerol 3-phosphate + NADP(+) = dihydroxyacetone phosphate + NADPH + H(+). Its pathway is membrane lipid metabolism; glycerophospholipid metabolism. Catalyzes the reduction of the glycolytic intermediate dihydroxyacetone phosphate (DHAP) to sn-glycerol 3-phosphate (G3P), the key precursor for phospholipid synthesis. This is Glycerol-3-phosphate dehydrogenase [NAD(P)+] from Acinetobacter baumannii (strain AB307-0294).